The sequence spans 129 residues: Azurin-1 (129 aa).

The region spanning 1-129 is the Plastocyanin-like domain; the sequence is AECSVDIAGN…LMKGVLKLVD (129 aa). C3 and C26 are joined by a disulfide. Cu cation-binding residues include H46, C112, H117, and M121.

Its subcellular location is the periplasm. In terms of biological role, transfers electrons from cytochrome c551 to cytochrome oxidase. This is Azurin-1 from Alcaligenes xylosoxydans xylosoxydans (Achromobacter xylosoxidans).